Here is a 201-residue protein sequence, read N- to C-terminus: Large ribosomal subunit protein uL4 (201 aa).

The tract at residues 44–68 (RAQKSRADVSGSGRKPWRQKGTGRA) is disordered.

It belongs to the universal ribosomal protein uL4 family. As to quaternary structure, part of the 50S ribosomal subunit.

One of the primary rRNA binding proteins, this protein initially binds near the 5'-end of the 23S rRNA. It is important during the early stages of 50S assembly. It makes multiple contacts with different domains of the 23S rRNA in the assembled 50S subunit and ribosome. Its function is as follows. Forms part of the polypeptide exit tunnel. This chain is Large ribosomal subunit protein uL4, found in Buchnera aphidicola subsp. Schizaphis graminum (strain Sg).